Here is a 190-residue protein sequence, read N- to C-terminus: uncharacterized protein (190 aa).

Residues 1–18 (MKLVHMASGLAVAIALAA) form the signal peptide. The N-palmitoyl cysteine moiety is linked to residue Cys-19. Cys-19 carries the S-diacylglycerol cysteine lipid modification. A compositionally biased stretch (low complexity) spans 162-182 (ASGGATTTVPSTSPTQVNPSS). A disordered region spans residues 162–190 (ASGGATTTVPSTSPTQVNPSSAVPAPTQY).

Its subcellular location is the cell membrane. This is an uncharacterized protein from Escherichia coli (strain K12).